The sequence spans 387 residues: Cysteine desulfurase IscS (387 aa).

Residues 73–74 (AT), N155, Q183, and 203–205 (SAH) contribute to the pyridoxal 5'-phosphate site. K206 carries the post-translational modification N6-(pyridoxal phosphate)lysine. T241 is a binding site for pyridoxal 5'-phosphate. The Cysteine persulfide intermediate role is filled by C328. C328 contributes to the [2Fe-2S] cluster binding site.

It belongs to the class-V pyridoxal-phosphate-dependent aminotransferase family. NifS/IscS subfamily. Homodimer. Forms a heterotetramer with IscU, interacts with other sulfur acceptors. The cofactor is pyridoxal 5'-phosphate.

It is found in the cytoplasm. The catalysed reaction is (sulfur carrier)-H + L-cysteine = (sulfur carrier)-SH + L-alanine. The protein operates within cofactor biosynthesis; iron-sulfur cluster biosynthesis. Its function is as follows. Master enzyme that delivers sulfur to a number of partners involved in Fe-S cluster assembly, tRNA modification or cofactor biosynthesis. Catalyzes the removal of elemental sulfur atoms from cysteine to produce alanine. Functions as a sulfur delivery protein for Fe-S cluster synthesis onto IscU, an Fe-S scaffold assembly protein, as well as other S acceptor proteins. This is Cysteine desulfurase IscS from Helicobacter pylori (strain P12).